Consider the following 542-residue polypeptide: Chaperonin GroEL (542 aa).

Residues 29–32, lysine 50, 86–90, glycine 414, and aspartate 494 contribute to the ATP site; these read TLGP and DGTTT.

This sequence belongs to the chaperonin (HSP60) family. As to quaternary structure, forms a cylinder of 14 subunits composed of two heptameric rings stacked back-to-back. Interacts with the co-chaperonin GroES.

It is found in the cytoplasm. The enzyme catalyses ATP + H2O + a folded polypeptide = ADP + phosphate + an unfolded polypeptide.. Functionally, together with its co-chaperonin GroES, plays an essential role in assisting protein folding. The GroEL-GroES system forms a nano-cage that allows encapsulation of the non-native substrate proteins and provides a physical environment optimized to promote and accelerate protein folding. The protein is Chaperonin GroEL of Cytophaga hutchinsonii (strain ATCC 33406 / DSM 1761 / CIP 103989 / NBRC 15051 / NCIMB 9469 / D465).